A 473-amino-acid polypeptide reads, in one-letter code: L-seryl-tRNA(Sec) selenium transferase (473 aa).

The residue at position 302 (lysine 302) is an N6-(pyridoxal phosphate)lysine.

It belongs to the SelA family. It depends on pyridoxal 5'-phosphate as a cofactor.

Its subcellular location is the cytoplasm. The catalysed reaction is L-seryl-tRNA(Sec) + selenophosphate + H(+) = L-selenocysteinyl-tRNA(Sec) + phosphate. The protein operates within aminoacyl-tRNA biosynthesis; selenocysteinyl-tRNA(Sec) biosynthesis; selenocysteinyl-tRNA(Sec) from L-seryl-tRNA(Sec) (bacterial route): step 1/1. Its function is as follows. Converts seryl-tRNA(Sec) to selenocysteinyl-tRNA(Sec) required for selenoprotein biosynthesis. In Shewanella oneidensis (strain ATCC 700550 / JCM 31522 / CIP 106686 / LMG 19005 / NCIMB 14063 / MR-1), this protein is L-seryl-tRNA(Sec) selenium transferase.